A 317-amino-acid chain; its full sequence is Aspartate carbamoyltransferase catalytic subunit (317 aa).

Carbamoyl phosphate-binding residues include Arg-64 and Thr-65. Lys-92 provides a ligand contact to L-aspartate. Residues Arg-114, His-144, and Gln-147 each contribute to the carbamoyl phosphate site. 2 residues coordinate L-aspartate: Arg-177 and Arg-232. Residues Gly-273 and Pro-274 each coordinate carbamoyl phosphate.

The protein belongs to the aspartate/ornithine carbamoyltransferase superfamily. ATCase family. In terms of assembly, heterododecamer (2C3:3R2) of six catalytic PyrB chains organized as two trimers (C3), and six regulatory PyrI chains organized as three dimers (R2).

It catalyses the reaction carbamoyl phosphate + L-aspartate = N-carbamoyl-L-aspartate + phosphate + H(+). It functions in the pathway pyrimidine metabolism; UMP biosynthesis via de novo pathway; (S)-dihydroorotate from bicarbonate: step 2/3. Catalyzes the condensation of carbamoyl phosphate and aspartate to form carbamoyl aspartate and inorganic phosphate, the committed step in the de novo pyrimidine nucleotide biosynthesis pathway. The sequence is that of Aspartate carbamoyltransferase catalytic subunit from Thiobacillus denitrificans (strain ATCC 25259 / T1).